The chain runs to 130 residues: Ribonuclease VapC46 (130 aa).

The 115-residue stretch at 4-118 (IYLDSSAIVK…CTYDDRMRDA (115 aa)) folds into the PINc domain. The Mg(2+) site is built by D7 and D91.

It belongs to the PINc/VapC protein family. Requires Mg(2+) as cofactor.

Its function is as follows. Toxic component of a type II toxin-antitoxin (TA) system. An RNase. Upon expression in M.smegmatis inhibits colony formation. Its toxic effect is neutralized by coexpression with cognate antitoxin VapB46. In Mycobacterium tuberculosis (strain ATCC 25618 / H37Rv), this protein is Ribonuclease VapC46.